The chain runs to 180 residues: UDP-4-amino-4,6-dideoxy-N-acetyl-beta-L-altrosamine N-acetyltransferase (180 aa).

The N-acetyltransferase domain occupies 13-169 (IDFTNLNDGE…IDVLLYYKDK (157 aa)).

The catalysed reaction is UDP-4-amino-4,6-dideoxy-N-acetyl-beta-L-altrosamine + acetyl-CoA = UDP-2,4-diacetamido-2,4,6-trideoxy-beta-L-altrose + CoA + H(+). Its function is as follows. Catalyzes the third step in the biosynthesis of pseudaminic acid, a sialic-acid-like sugar that is used to modify flagellin. Mediates N-4 acetylation of UDP-4-amino-4,6-dideoxy-beta-L-AltNAc to form UDP-2,4-diacetamido-2,4,6-trideoxy-beta-L-altropyranose. In Helicobacter pylori (strain ATCC 700392 / 26695) (Campylobacter pylori), this protein is UDP-4-amino-4,6-dideoxy-N-acetyl-beta-L-altrosamine N-acetyltransferase (pseH).